A 913-amino-acid polypeptide reads, in one-letter code: MFNCDVTAIDLTPMPLFSADNMTTAFLSTDTSVVEKSLFGIPEWLLQINDDISRALERGVNIRQLVSARACVIDDLLIELFKCFGLDKTDLALFATGGYGRGELSLHSDIDILLLMPHDINADTSSKIDNLVALLWDIGLEPALSVRSVSDCLEAALDHTIASALLEARLLIGNDALQNVPHQIVNNQWSPRSFYDVKIDEAKARYLQHNATEYNLEPNIKTAPGGLRDIHIIGWVTKRYFRVSKLYDLVQQNFLTEKEFDELSFSENYLWQIRHYLHELTGRNENKLLFDYQREIAQLMGYDTQTDDQPNAAVERFMRDYYRCAMQISTLSEMLTNHYYETIIEAQLPDEERPKKQPINARFNQVGDQIAMAHHRVFAQHPESILEMFLLMGQYGIKNVRTHTLRALKIAARGIDQAYRDNPTHQTLFLANLKEQNYLFHRLRTMNRYGVLGNYIPAFAQVTGLMQYDLFHRYTVDAHTLFLIRILHRFTDPHFYEDFPLVSSIFQRIERKEILVLAAMFHDIAKGRGGNHSQLGEIESIEFCLAHGMSTADANLVGWLTRYHLLMSMTAQKKDISDPEVVTLFADLVGNVTHLNHLYVLTVADMNATNPQLWNSWRATLMKQLYSQTRRILRADIDAPTNRQDMISATRKQALVMLDNVDNQHMNRDEVLRLWDDLGDEYFLREIAEDILWHTEAILNHPPIGRASNADSPPLVVLREHRELALDAVQVFVYTQDQVNLFAVTMAVFDQMNLDVLDARIITATRDFALDSYVLLDRSGTLLVDSDSQQELKQRLIDAFKNPTAPKLTHKRIPRQLKHFDVATTINFDFNDASNQHIMSLETLDQPGLLARVGQVFLQQQIEVHAARITTLGERAEDMFYISDQNDQALSADKLKTLKTALIDSLSVRNDRV.

The tract at residues 1 to 358 (MFNCDVTAID…PDEERPKKQP (358 aa)) is uridylyltransferase. Positions 359 to 729 (INARFNQVGD…EHRELALDAV (371 aa)) are uridylyl-removing. Positions 476–592 (VDAHTLFLIR…TLFADLVGNV (117 aa)) constitute an HD domain. 2 ACT domains span residues 730–815 (QVFV…RIPR) and 838–913 (IMSL…NDRV).

Belongs to the GlnD family. Requires Mg(2+) as cofactor.

It carries out the reaction [protein-PII]-L-tyrosine + UTP = [protein-PII]-uridylyl-L-tyrosine + diphosphate. It catalyses the reaction [protein-PII]-uridylyl-L-tyrosine + H2O = [protein-PII]-L-tyrosine + UMP + H(+). With respect to regulation, uridylyltransferase (UTase) activity is inhibited by glutamine, while glutamine activates uridylyl-removing (UR) activity. In terms of biological role, modifies, by uridylylation and deuridylylation, the PII regulatory proteins (GlnB and homologs), in response to the nitrogen status of the cell that GlnD senses through the glutamine level. Under low glutamine levels, catalyzes the conversion of the PII proteins and UTP to PII-UMP and PPi, while under higher glutamine levels, GlnD hydrolyzes PII-UMP to PII and UMP (deuridylylation). Thus, controls uridylylation state and activity of the PII proteins, and plays an important role in the regulation of nitrogen assimilation and metabolism. The chain is Bifunctional uridylyltransferase/uridylyl-removing enzyme from Psychrobacter cryohalolentis (strain ATCC BAA-1226 / DSM 17306 / VKM B-2378 / K5).